A 124-amino-acid chain; its full sequence is Acidic phospholipase A2 BA1 (124 aa).

7 disulfides stabilise this stretch: cysteine 26/cysteine 116, cysteine 28/cysteine 44, cysteine 43/cysteine 95, cysteine 49/cysteine 124, cysteine 50/cysteine 88, cysteine 57/cysteine 81, and cysteine 75/cysteine 86. Residues tyrosine 27, glycine 29, and glycine 31 each contribute to the Ca(2+) site. Histidine 47 is a catalytic residue. Aspartate 48 contributes to the Ca(2+) binding site. Residue aspartate 89 is part of the active site.

Belongs to the phospholipase A2 family. Group II subfamily. D49 sub-subfamily. Ca(2+) is required as a cofactor. In terms of tissue distribution, expressed by the venom gland.

It is found in the secreted. It catalyses the reaction a 1,2-diacyl-sn-glycero-3-phosphocholine + H2O = a 1-acyl-sn-glycero-3-phosphocholine + a fatty acid + H(+). Its function is as follows. PLA2 catalyzes the calcium-dependent hydrolysis of the 2-acyl groups in 3-sn-phosphoglycerides. The protein is Acidic phospholipase A2 BA1 of Gloydius halys (Chinese water mocassin).